Here is a 212-residue protein sequence, read N- to C-terminus: uncharacterized protein (212 aa).

Residues 186–206 (VITLISFMLFSILFFLIFLIV) traverse the membrane as a helical segment.

It localises to the membrane. This is an uncharacterized protein from Mycoplasma genitalium (strain ATCC 33530 / DSM 19775 / NCTC 10195 / G37) (Mycoplasmoides genitalium).